Consider the following 114-residue polypeptide: Large ribosomal subunit protein uL22 (114 aa).

Belongs to the universal ribosomal protein uL22 family. As to quaternary structure, part of the 50S ribosomal subunit.

Its function is as follows. This protein binds specifically to 23S rRNA; its binding is stimulated by other ribosomal proteins, e.g. L4, L17, and L20. It is important during the early stages of 50S assembly. It makes multiple contacts with different domains of the 23S rRNA in the assembled 50S subunit and ribosome. In terms of biological role, the globular domain of the protein is located near the polypeptide exit tunnel on the outside of the subunit, while an extended beta-hairpin is found that lines the wall of the exit tunnel in the center of the 70S ribosome. In Methylacidiphilum infernorum (isolate V4) (Methylokorus infernorum (strain V4)), this protein is Large ribosomal subunit protein uL22.